The sequence spans 106 residues: Iron-sulfur cluster assembly protein CyaY (106 aa).

Belongs to the frataxin family.

Involved in iron-sulfur (Fe-S) cluster assembly. May act as a regulator of Fe-S biogenesis. The chain is Iron-sulfur cluster assembly protein CyaY from Klebsiella pneumoniae subsp. pneumoniae (strain ATCC 700721 / MGH 78578).